We begin with the raw amino-acid sequence, 555 residues long: Neutral amino acid transporter B(0) (555 aa).

Methionine 1 is subject to N-acetylmethionine. The Cytoplasmic segment spans residues 1 to 52 (MAVDPPKADPKGVVAVDPTANCGSGLKSREDQGAKAGGCCSSRDQVCRCLRA). Residues 53-82 (NLLVLLTVAAAVAGVVLGLGVSAAGGAEAL) traverse the membrane as a helical segment. The Extracellular segment spans residues 83–95 (GHARFTAFAFPGE). The helical transmembrane segment at 96–117 (LLLRLLEMIILPLVVCSLIGGA) threads the bilayer. The Cytoplasmic portion of the chain corresponds to 118-131 (ASLDPSALGRLGAW). A helical transmembrane segment spans residues 132-154 (ALLFFLVTTLLSSALGVALALAL). Residues 155–239 (KPGAAFAAIN…SNATMDQPHC (85 aa)) lie on the Extracellular side of the membrane. Asparagine 164 and asparagine 231 each carry an N-linked (GlcNAc...) asparagine glycan. Residues 240–262 (EMKMNILGLVVFAIVFGVALRKL) traverse the membrane as a helical segment. At 263–271 (GPEGELLIR) the chain is on the cytoplasmic side. The helical transmembrane segment at 272–299 (FFNSFNDATMVLVSWIMWYAPIGILFLV) threads the bilayer. At 300-320 (AGKIVEMKDIRQLFIGLGKYI) the chain is on the extracellular side. The helical transmembrane segment at 321–342 (VCCLLGHAIHGLLVLPLIYFLF) threads the bilayer. Over 343 to 347 (TRKNP) the chain is Cytoplasmic. The discontinuously helical intramembrane region spans 348-378 (YRFLWGIVTPLATAFGTSSSSATLPLMMKCV). The Cytoplasmic segment spans residues 379–387 (EEKNGVAKH). A helical transmembrane segment spans residues 388–414 (ISRFILPIGATVNMDGAALFQCVAAVF). The Na(+) site is built by glycine 396, threonine 398, and asparagine 400. Residues 415 to 427 (IAQLNGMSLDFVK) lie on the Extracellular side of the membrane. The discontinuously helical intramembrane region spans 428 to 461 (IITILVTATASSVGAAGIPAGGVLTLAIILEAIS). Residues 462–474 (LPVKDISLILAVD) lie on the Extracellular side of the membrane. Residues 475 to 496 (WLVDRSCTVLNVEGDAFGAGLL) traverse the membrane as a helical segment. Positions 485 and 489 each coordinate Na(+). Residues 497–555 (QSYVDRTKMPSSEPELIQVKNDVSLKPLPLATEEGNPLLKQCREPSGDSSATCEKESVM) are Cytoplasmic-facing. Serine 507, serine 508, serine 520, serine 545, and serine 553 each carry phosphoserine. Positions 534–555 (LLKQCREPSGDSSATCEKESVM) are disordered.

Belongs to the dicarboxylate/amino acid:cation symporter (DAACS) (TC 2.A.23) family. In terms of assembly, homotrimer.

It is found in the cell membrane. The protein localises to the melanosome. The catalysed reaction is L-glutamine(out) + L-serine(in) + Na(+)(out) = L-glutamine(in) + L-serine(out) + Na(+)(in). It catalyses the reaction L-glutamine(in) + L-serine(out) + Na(+)(out) = L-glutamine(out) + L-serine(in) + Na(+)(in). The enzyme catalyses L-threonine(in) + L-glutamine(out) + Na(+)(out) = L-threonine(out) + L-glutamine(in) + Na(+)(in). It carries out the reaction L-threonine(out) + L-glutamine(in) + Na(+)(out) = L-threonine(in) + L-glutamine(out) + Na(+)(in). The catalysed reaction is L-asparagine(in) + L-glutamine(out) + Na(+)(out) = L-asparagine(out) + L-glutamine(in) + Na(+)(in). It catalyses the reaction L-asparagine(out) + L-glutamine(in) + Na(+)(out) = L-asparagine(in) + L-glutamine(out) + Na(+)(in). The enzyme catalyses L-glutamine(in) + L-alanine(out) + Na(+)(out) = L-glutamine(out) + L-alanine(in) + Na(+)(in). It carries out the reaction L-valine(out) + L-glutamine(in) + Na(+)(out) = L-valine(in) + L-glutamine(out) + Na(+)(in). The catalysed reaction is L-glutamine(in) + L-methionine(out) + Na(+)(out) = L-glutamine(out) + L-methionine(in) + Na(+)(in). It catalyses the reaction L-glutamine(in) + L-glutamate(out) + Na(+)(out) + H(+)(out) = L-glutamine(out) + L-glutamate(in) + Na(+)(in) + H(+)(in). The enzyme catalyses D-serine(in) + L-glutamine(out) + Na(+)(out) = D-serine(out) + L-glutamine(in) + Na(+)(in). It carries out the reaction D-serine(in) + L-alanine(out) + Na(+)(out) = D-serine(out) + L-alanine(in) + Na(+)(in). The catalysed reaction is nitrate(in) = nitrate(out). It catalyses the reaction iodide(out) = iodide(in). The enzyme catalyses thiocyanate(in) = thiocyanate(out). Its activity is regulated as follows. Down-regulated at acidic pH. Sodium-coupled antiporter of neutral amino acids. In a tri-substrate transport cycle, exchanges neutral amino acids between the extracellular and intracellular compartments, coupled to the inward cotransport of at least one sodium ion. The preferred substrate is the essential amino acid L-glutamine, a precursor for biosynthesis of proteins, nucleotides and amine sugars as well as an alternative fuel for mitochondrial oxidative phosphorylation. Exchanges L-glutamine with other neutral amino acids such as L-serine, L-threonine and L-asparagine in a bidirectional way. Provides L-glutamine to proliferating stem and activated cells driving the metabolic switch toward cell differentiation. The transport cycle is usually pH-independent, with the exception of L-glutamate. Transports extracellular L-glutamate coupled to the cotransport of one proton and one sodium ion in exchange for intracellular L-glutamine counter-ion. May provide for L-glutamate uptake in glial cells regulating glutamine/glutamate cycle in the nervous system. Can transport D-amino acids. Mediates D-serine release from the retinal glia potentially affecting NMDA receptor function in retinal neurons. Displays sodium- and amino acid-dependent but uncoupled channel-like anion conductance with a preference SCN(-) &gt;&gt; NO3(-) &gt; I(-) &gt; Cl(-). Through binding of the fusogenic protein syncytin-1/ERVW-1 may mediate trophoblasts syncytialization, the spontaneous fusion of their plasma membranes, an essential process in placental development. The sequence is that of Neutral amino acid transporter B(0) (Slc1a5) from Rattus norvegicus (Rat).